A 673-amino-acid chain; its full sequence is Ribonucleoprotein PTB-binding 2 (673 aa).

A compositionally biased stretch (gly residues) spans 1-17; it reads MAARGGGAGGAGSGSGP. Residues 1–34 form a disordered region; that stretch reads MAARGGGAGGAGSGSGPSAGTAGEAAEPALRPGE. Residues 18 to 29 are compositionally biased toward low complexity; sequence SAGTAGEAAEPA. RRM domains are found at residues 58–129, 131–209, and 220–298; these read RKIL…LQPT, ALLC…WMDV, and KCLC…FCAP. Positions 481–549 are disordered; sequence QLPAGQAGPG…KGTEVASKNQ (69 aa). Residues 499–512 are compositionally biased toward low complexity; that stretch reads SASVSISEASFSGS. The segment covering 529-549 has biased composition (polar residues); the sequence is TGNQKTPQSQPKGTEVASKNQ.

In terms of assembly, interacts with PTBP1 and RAVER1. In terms of tissue distribution, expressed throughout embryogenesis. Detected at low levels in adult lung, brain and kidney, but not in the other tissues tested.

It localises to the nucleus. The protein resides in the cytoplasm. In terms of biological role, may bind single-stranded nucleic acids. In Mus musculus (Mouse), this protein is Ribonucleoprotein PTB-binding 2 (Raver2).